The following is a 273-amino-acid chain: MVVKVGVLKMGAIGTALLVEYLLDERADREDIEVRVVTSGAKMQPEEAVVAEKLKEFDPDVVIVVSPNAALPGPKAAREAFEGKPVIVISDAPAKKAKDELKEKGFGYILINADSMIGARREFLDPTEMALFNADVVKVLAATGAFRLVQEAIDKVIEDIKAGKQPELPQIVVTAEKAVEAGKFSNPYAKAKAMAAFYIAEKVADIDVKGCFIEKDPEKYIPLVASAHEMMRIAAILADQAREIEKSNDTVFRNPHAKDGKILGKTQLMAKPE.

This sequence belongs to the MTD family.

It catalyses the reaction 5,10-methylenetetrahydromethanopterin + oxidized coenzyme F420-(gamma-L-Glu)(n) + 2 H(+) = 5,10-methenyl-5,6,7,8-tetrahydromethanopterin + reduced coenzyme F420-(gamma-L-Glu)(n). It functions in the pathway metabolic intermediate metabolism; lactate oxidation. Catalyzes the oxidation of methylene-H(4)MPT to methenyl-H(4)MPT(+). This Archaeoglobus fulgidus (strain ATCC 49558 / DSM 4304 / JCM 9628 / NBRC 100126 / VC-16) protein is F420-dependent methylenetetrahydromethanopterin dehydrogenase (mtd).